Consider the following 325-residue polypeptide: Elongation factor P--(R)-beta-lysine ligase (325 aa).

76-78 (SPE) contacts substrate. Residues 100 to 102 (RNE) and Asn109 each bind ATP. Tyr118 serves as a coordination point for substrate. Position 244 to 245 (244 to 245 (EL)) interacts with ATP. Glu251 serves as a coordination point for substrate. Position 300 (Gly300) interacts with ATP.

It belongs to the class-II aminoacyl-tRNA synthetase family. EpmA subfamily. In terms of assembly, homodimer.

It carries out the reaction D-beta-lysine + L-lysyl-[protein] + ATP = N(6)-((3R)-3,6-diaminohexanoyl)-L-lysyl-[protein] + AMP + diphosphate + H(+). Functionally, with EpmB is involved in the beta-lysylation step of the post-translational modification of translation elongation factor P (EF-P). Catalyzes the ATP-dependent activation of (R)-beta-lysine produced by EpmB, forming a lysyl-adenylate, from which the beta-lysyl moiety is then transferred to the epsilon-amino group of a conserved specific lysine residue in EF-P. This Enterobacter sp. (strain 638) protein is Elongation factor P--(R)-beta-lysine ligase.